Consider the following 30-residue polypeptide: Cycloviolin-C (30 aa).

Residues 1 to 30 (GIPCGESCVFIPCLTTVAGCSCKNKVCYRN) constitute a cross-link (cyclopeptide (Gly-Asn)). 3 disulfides stabilise this stretch: Cys4–Cys20, Cys8–Cys22, and Cys13–Cys27.

Post-translationally, this is a cyclic peptide.

Its function is as follows. Probably participates in a plant defense mechanism. Has anti-HIV activity. This is Cycloviolin-C from Leonia cymosa (Sacha uba).